A 230-amino-acid polypeptide reads, in one-letter code: Sugar fermentation stimulation protein homolog (230 aa).

It belongs to the SfsA family.

This chain is Sugar fermentation stimulation protein homolog, found in Ruegeria pomeroyi (strain ATCC 700808 / DSM 15171 / DSS-3) (Silicibacter pomeroyi).